Here is a 639-residue protein sequence, read N- to C-terminus: Chaperone protein HtpG (639 aa).

Residues 1 to 348 (MAQYEFQTEV…SEDLPLNVSR (348 aa)) are a; substrate-binding. The segment at 349-565 (EILQQNRVLA…ENDPTVQMER (217 aa)) is b. The tract at residues 566–639 (LMRATGQTHK…KRVNRLLARG (74 aa)) is c.

Belongs to the heat shock protein 90 family. As to quaternary structure, homodimer.

The protein resides in the cytoplasm. Molecular chaperone. Has ATPase activity. The sequence is that of Chaperone protein HtpG from Treponema pallidum (strain Nichols).